Consider the following 129-residue polypeptide: Small ribosomal subunit protein uS11 (129 aa).

Belongs to the universal ribosomal protein uS11 family. In terms of assembly, part of the 30S ribosomal subunit. Interacts with proteins S7 and S18. Binds to IF-3.

Functionally, located on the platform of the 30S subunit, it bridges several disparate RNA helices of the 16S rRNA. Forms part of the Shine-Dalgarno cleft in the 70S ribosome. In Enterococcus faecalis (strain ATCC 700802 / V583), this protein is Small ribosomal subunit protein uS11.